The sequence spans 72 residues: Translation initiation factor IF-1 (72 aa).

The region spanning 1-72 is the S1-like domain; the sequence is MSKDDCIEFE…TKGRIIYRMK (72 aa).

Belongs to the IF-1 family. As to quaternary structure, component of the 30S ribosomal translation pre-initiation complex which assembles on the 30S ribosome in the order IF-2 and IF-3, IF-1 and N-formylmethionyl-tRNA(fMet); mRNA recruitment can occur at any time during PIC assembly.

It is found in the cytoplasm. Functionally, one of the essential components for the initiation of protein synthesis. Stabilizes the binding of IF-2 and IF-3 on the 30S subunit to which N-formylmethionyl-tRNA(fMet) subsequently binds. Helps modulate mRNA selection, yielding the 30S pre-initiation complex (PIC). Upon addition of the 50S ribosomal subunit IF-1, IF-2 and IF-3 are released leaving the mature 70S translation initiation complex. In Xylella fastidiosa (strain Temecula1 / ATCC 700964), this protein is Translation initiation factor IF-1.